Here is a 190-residue protein sequence, read N- to C-terminus: uncharacterized protein (190 aa).

2 disordered regions span residues 1-21 (MALR…ATVG) and 155-190 (PEMG…TQAS). Low complexity predominate over residues 181–190 (SPSSHPTQAS).

This is an uncharacterized protein from Homo sapiens (Human).